A 410-amino-acid polypeptide reads, in one-letter code: MTARLALLASLLLLLQLVPPSSAVVLELHGNVYPIGHFFVTMNIGDPAKPYFLDIDTGSTLTWLQCDYPCINCNKVPHGLYKPELKYAVKCTEQRCADLYADLRKPMKCGPKNQCHYGIQYVGGSSIGVLIVDSFSLPASNGTNPTSIAFGCGYNQGKNNHNVPTPVNGILGLGRGKVTLLSQLKSQGVITKHVLGHCISSKGKGFLFFGDAKVPTSGVTWSPMNREHKHYSPRQGTLQFNSNSKPISAAPMEVIFDSGATYTYFALQPYHATLSVVKSTLSKECKFLTEVKEKDRALTVCWKGKDKIRTIDEVKKCFRSLSLKFADGDKKATLEIPPEHYLIISQEGHVCLGILDGSKEHPSLAGTNLIGGITMLDQMVIYDSERSLLGWVNYQCDRIPRSASAITSRL.

Residues 1–23 form the signal peptide; the sequence is MTARLALLASLLLLLQLVPPSSA. A propeptide spans 24-46 (removed in mature form); the sequence is VVLELHGNVYPIGHFFVTMNIGD. Positions 38–392 constitute a Peptidase A1 domain; it reads FFVTMNIGDP…DSERSLLGWV (355 aa). Active-site residues include aspartate 56 and aspartate 257.

It belongs to the peptidase A1 family. In terms of tissue distribution, expressed in pollen, nucellus, ovary wall, shoot and root meristem, coleoptiles of immature seeds, and somatic embryos.

Its function is as follows. Possesses protease activity in vitro. The chain is Aspartic proteinase Asp1 (ASP1) from Oryza sativa subsp. indica (Rice).